The following is a 502-amino-acid chain: ATP synthase subunit alpha (502 aa).

Positions 114–139 (PIDGRGPIETSKTRPIESPAPGVMDR) are disordered. Position 169–176 (169–176 (GDRQTGKT)) interacts with ATP.

The protein belongs to the ATPase alpha/beta chains family. In terms of assembly, F-type ATPases have 2 components, CF(1) - the catalytic core - and CF(0) - the membrane proton channel. CF(1) has five subunits: alpha(3), beta(3), gamma(1), delta(1), epsilon(1). CF(0) has three main subunits: a(1), b(2) and c(9-12). The alpha and beta chains form an alternating ring which encloses part of the gamma chain. CF(1) is attached to CF(0) by a central stalk formed by the gamma and epsilon chains, while a peripheral stalk is formed by the delta and b chains.

Its subcellular location is the cell membrane. The enzyme catalyses ATP + H2O + 4 H(+)(in) = ADP + phosphate + 5 H(+)(out). In terms of biological role, produces ATP from ADP in the presence of a proton gradient across the membrane. The alpha chain is a regulatory subunit. The protein is ATP synthase subunit alpha of Halalkalibacterium halodurans (strain ATCC BAA-125 / DSM 18197 / FERM 7344 / JCM 9153 / C-125) (Bacillus halodurans).